The following is a 341-amino-acid chain: Probable electron transfer flavoprotein subunit alpha, mitochondrial (341 aa).

285–313 contributes to the FAD binding site; that stretch reads LYIAVGIDGAIQHLAGIKDSKVIAAINRD.

The protein belongs to the ETF alpha-subunit/FixB family. In terms of assembly, heterodimer of an alpha and a beta subunit. It depends on FAD as a cofactor.

Its subcellular location is the mitochondrion matrix. In terms of biological role, the electron transfer flavoprotein serves as a specific electron acceptor for several dehydrogenases, including five acyl-CoA dehydrogenases, glutaryl-CoA and sarcosine dehydrogenase. It transfers the electrons to the main mitochondrial respiratory chain via ETF-ubiquinone oxidoreductase (ETF dehydrogenase). In Schizosaccharomyces pombe (strain 972 / ATCC 24843) (Fission yeast), this protein is Probable electron transfer flavoprotein subunit alpha, mitochondrial.